Consider the following 174-residue polypeptide: CASP-like protein 4D2 (174 aa).

The Cytoplasmic segment spans residues 1–14 (MAPPPPSPPPVSLK). Residues 15–35 (VSLLLLRVLTGVFLVIALIIL) traverse the membrane as a helical segment. Residues 36–60 (STNSVTIVSQGSALKFHFKDVYAYR) are Extracellular-facing. Residues 61–81 (YMLSAAVIGLLYAVIQLFFTI) traverse the membrane as a helical segment. The Cytoplasmic segment spans residues 82 to 150 (SEFATGMKNP…FFSRGYASAS (69 aa)). The chain crosses the membrane as a helical span at residues 151–171 (LLLFSFICLAVLSVFSSLAIA). Residues 172-174 (KRN) lie on the Extracellular side of the membrane.

It belongs to the Casparian strip membrane proteins (CASP) family. Homodimer and heterodimers.

Its subcellular location is the cell membrane. In Arabidopsis lyrata subsp. lyrata (Lyre-leaved rock-cress), this protein is CASP-like protein 4D2.